A 113-amino-acid polypeptide reads, in one-letter code: Putative pterin-4-alpha-carbinolamine dehydratase (113 aa).

The protein belongs to the pterin-4-alpha-carbinolamine dehydratase family.

It catalyses the reaction (4aS,6R)-4a-hydroxy-L-erythro-5,6,7,8-tetrahydrobiopterin = (6R)-L-erythro-6,7-dihydrobiopterin + H2O. This chain is Putative pterin-4-alpha-carbinolamine dehydratase, found in Chlorobium limicola (strain DSM 245 / NBRC 103803 / 6330).